Consider the following 554-residue polypeptide: MSSVGIASASLWLRGPVKSALKGRWLSCEQMRRYGTKSAPAVRKGGHSKKARQAPSLPFVFGRHKQLTGPEFTRRTRIGNLSDKITKFEQLKLLPEVREVMMKVIASESVLNKSLDDEDCGLDDKRVAAFLGQVQPTPIQTAVIKKMAKTLMEPQLQVHMVAAETGSGKTMSYLMPLVDYLKQEEQAAGTEEGRARLGALRSLILVPTHELVEQVYMTLEKLQEPLQLKTFKLDRDTPYKDIVEAFKGRVDIMVTTPGKLRGLFKIRMLHRPDRILSQVRFAVVDEADTLMDQSWVQETYSCIKSLRDANHLVFCSASVPMEFEKAMNKLFPNLQVVASEKLHRINKHSNIKIINVALRPYNGSKMKALAQALYAIMKDGTSEGYEKRCVVFVNEADSVNSIVDTLRDKFGHDVHGLTGEHSLDDRLATIAPFMRSPPRIQDQVRPSELKKPQERRLPNSNIKVADSKDNGQRSVSSPLKVLVTTDVLSRGINFKGVKHVILYDVPAKSIDLVHRVGRTSRMNERGHVYIFVGKKGSAQAKGLNPVVKKNRPIQ.

The transit peptide at 1–54 (MSSVGIASASLWLRGPVKSALKGRWLSCEQMRRYGTKSAPAVRKGGHSKKARQA) directs the protein to the mitochondrion. Positions 119–140 (DCGLDDKRVAAFLGQVQPTPIQ) match the Q motif motif. One can recognise a Helicase ATP-binding domain in the interval 150-337 (TLMEPQLQVH…NKLFPNLQVV (188 aa)). 163–170 (AETGSGKT) is an ATP binding site. The DEAD box motif lies at 285–288 (DEAD). Residues 368–554 (ALAQALYAIM…PVVKKNRPIQ (187 aa)) enclose the Helicase C-terminal domain. Residues 439–474 (RIQDQVRPSELKKPQERRLPNSNIKVADSKDNGQRS) are disordered. A compositionally biased stretch (basic and acidic residues) spans 445–457 (RPSELKKPQERRL).

It belongs to the DEAD box helicase family. MRH4 subfamily.

Its subcellular location is the mitochondrion. It catalyses the reaction ATP + H2O = ADP + phosphate + H(+). In terms of biological role, ATP-binding RNA helicase involved in mitochondrial RNA metabolism. Required for maintenance of mitochondrial DNA. In Eremothecium gossypii (strain ATCC 10895 / CBS 109.51 / FGSC 9923 / NRRL Y-1056) (Yeast), this protein is ATP-dependent RNA helicase MRH4, mitochondrial (MRH4).